A 377-amino-acid polypeptide reads, in one-letter code: Interferon gamma receptor 1 (377 aa).

The N-terminal stretch at 1-23 (MRTQIYISVTVLILLLKKSDLEA) is a signal peptide. Residues 24-235 (VRVPSPESVS…IRRYTPFTVY (212 aa)) lie on the Extracellular side of the membrane. A Fibronectin type-III domain is found at 26–117 (VPSPESVSVQ…DFFIFSFNEN (92 aa)). Asn78 and Asn186 each carry an N-linked (GlcNAc...) asparagine glycan. A helical membrane pass occupies residues 236–256 (LYPVLGVTLTLLFITGIIILL). The Cytoplasmic segment spans residues 257 to 377 (EKKCNSEMKK…TVDSYGPRLL (121 aa)). The disordered stretch occupies residues 326–377 (VYSEDKNSYGPNDLVEDEQSDLSDFYDCPHAPKQKREMSPGDTVDSYGPRLL).

It belongs to the type II cytokine receptor family. As to expression, highly expressed in spleen. Also detected in brain, kidney, gill, intestine and heart. Expressed at very low levels in muscle. In immune cell populations, shows highest expression in monocytes, and slightly lower expression in peripheral blood leukocytes, splenocytes, neutrophils and mature macrophages.

Its subcellular location is the cell membrane. Functionally, receptor which shows binding specificity for the cytokine ifng1r (interferon gamma-related). The protein is Interferon gamma receptor 1 of Carassius auratus (Goldfish).